Here is a 63-residue protein sequence, read N- to C-terminus: Kurtoxin-like II (63 aa).

Residues 2–62 (IDGYPVDYWN…ARIKRSGRCR (61 aa)) form the LCN-type CS-alpha/beta domain. 4 cysteine pairs are disulfide-bonded: cysteine 12-cysteine 61, cysteine 16-cysteine 37, cysteine 23-cysteine 44, and cysteine 27-cysteine 46.

Belongs to the long (4 C-C) scorpion toxin superfamily. Sodium channel inhibitor family. Alpha subfamily. In terms of tissue distribution, expressed by the venom gland.

The protein resides in the secreted. In terms of biological role, this neurotoxin acts on sodium and calcium channels. Potently inhibits native voltage-gated T-type calcium channel activity in mouse male germ cells. Also binds Cav3.1/CACNA1G, Cav3.2/CACNA1H, and Cav3.3/CACNA1I T-type calcium channels and inhibits the channels by modifying voltage-dependent gating. In addition, binds and significantly inhibits the inactivation of activated sodium channels (Nav1.2/SCN2A and Nav1.5/SCN5A). The sequence is that of Kurtoxin-like II from Parabuthus granulatus (Granulated thick-tailed scorpion).